The following is a 379-amino-acid chain: UDP-4-amino-4-deoxy-L-arabinose--oxoglutarate aminotransferase (379 aa).

Residue K182 is modified to N6-(pyridoxal phosphate)lysine.

The protein belongs to the DegT/DnrJ/EryC1 family. ArnB subfamily. Homodimer. Pyridoxal 5'-phosphate is required as a cofactor.

It catalyses the reaction UDP-4-amino-4-deoxy-beta-L-arabinose + 2-oxoglutarate = UDP-beta-L-threo-pentopyranos-4-ulose + L-glutamate. It functions in the pathway nucleotide-sugar biosynthesis; UDP-4-deoxy-4-formamido-beta-L-arabinose biosynthesis; UDP-4-deoxy-4-formamido-beta-L-arabinose from UDP-alpha-D-glucuronate: step 2/3. Its pathway is bacterial outer membrane biogenesis; lipopolysaccharide biosynthesis. Its function is as follows. Catalyzes the conversion of UDP-4-keto-arabinose (UDP-Ara4O) to UDP-4-amino-4-deoxy-L-arabinose (UDP-L-Ara4N). The modified arabinose is attached to lipid A and is required for resistance to polymyxin and cationic antimicrobial peptides. The protein is UDP-4-amino-4-deoxy-L-arabinose--oxoglutarate aminotransferase of Salmonella heidelberg (strain SL476).